The primary structure comprises 512 residues: Endo-1,4-beta-xylanase A (512 aa).

The signal sequence occupies residues 1–30; the sequence is MKRKVKKMAAMATSIIMAIMIILHSIPVLA. In terms of domain architecture, GH11 spans 33-228; sequence IIYDNETGTH…SSGYANVYKN (196 aa). The active-site Nucleophile is Glu124. The Proton donor role is filled by Glu215. 2 consecutive CBM6 domains span residues 251-371 and 388-508; these read SIIE…FIFS and SIIQ…FVFS. Glu254 and Glu256 together coordinate Ca(2+). Position 271 (Thr271) interacts with D-xylotriose. Position 276 (Arg276) interacts with Ca(2+). Repeat unit 1 spans residues 279 to 340; it reads GYIENGNTVT…SSTGSWNTYQ (62 aa). The 2 X 61 AA approximate repeats stretch occupies residues 279-477; sequence GYIENGNTVT…GSTGSFDTYR (199 aa). D-xylotriose-binding residues include Tyr280, Asn337, and Asn364. The D-xylobiose site is built by Tyr280, Asn337, and Asn364. Ca(2+) contacts are provided by Asp366, Gln391, Glu393, and Ser413. Residues 416-477 form repeat 2; the sequence is GYIENGYSTT…GSTGSFDTYR (62 aa). 3 residues coordinate D-xylotriose: Tyr417, Asp474, and Asn501. Asp503 serves as a coordination point for Ca(2+).

It belongs to the glycosyl hydrolase 11 (cellulase G) family.

It catalyses the reaction Endohydrolysis of (1-&gt;4)-beta-D-xylosidic linkages in xylans.. The protein operates within glycan degradation; xylan degradation. This Thermoclostridium stercorarium (Clostridium stercorarium) protein is Endo-1,4-beta-xylanase A (xynA).